The chain runs to 112 residues: CENP-A recruiting complex protein mis19 (112 aa).

Component of the CENP-A recruiting complex composed of at least mis16, mis19, mis19 and mis20.

It localises to the chromosome. It is found in the centromere. The protein localises to the kinetochore. Functionally, component of the CENP-A recruiting complex that ensures the integrity of mitotic spindles through maintenance of kinetochore factors mis6/CENP-I and cnp1/CENP-A. Links mis16 and mis18 to recruit CENP-A through interacting with non-sense-mediated mRNA decay (NMD) factors and the SWI/SNF complex. Also links mis18 with the CCAN/mis6/ctf19 complex to promote CENP-A assembly. The polypeptide is CENP-A recruiting complex protein mis19 (Schizosaccharomyces pombe (strain 972 / ATCC 24843) (Fission yeast)).